The chain runs to 884 residues: Probable disease resistance protein At1g12290 (884 aa).

Residues 26–66 are a coiled coil; it reads LYYIQNIKENLTSLEEAMEDLKALRDDLLRKVQTAEEGGLQ. The NB-ARC domain occupies 139–443; sequence AHPATRAVGE…CEGFIDGDEN (305 aa). 182-189 contacts ATP; the sequence is GMGGVGKT. LRR repeat units lie at residues 519–540, 541–563, 566–588, 590–612, 613–635, and 644–664; these read VVSR…PECP, KLTT…FFRS, RLVV…ISEL, SLRY…LKLK, KLMH…DHLS, and NLRM…ENLE.

It belongs to the disease resistance NB-LRR family.

Probable disease resistance protein. This Arabidopsis thaliana (Mouse-ear cress) protein is Probable disease resistance protein At1g12290.